The chain runs to 116 residues: Photosystem II assembly factor Psb28 protein (116 aa).

This sequence belongs to the Psb28 family. Part of a photosystem II (PSII) assembly intermediate complex PSII-I; crystallized from a strain deleted of psbJ, it forms monomeric PSII before addition of the oxygen evolving complex. PSII-I includes 3 assembly factors not found in mature PSII (Psb27, Psb28 and Psb34). This protein binds to the cytoplasmic face of D1 and D2 (psbA and psbD), contacting CP47 (psbB) directly above the quinone b-binding site.

The protein localises to the cellular thylakoid membrane. In terms of biological role, a photosystem II (PSII) assembly factor that binds PSII during biogenesis, protecting the complex until water splitting is activated. This Thermosynechococcus vestitus (strain NIES-2133 / IAM M-273 / BP-1) protein is Photosystem II assembly factor Psb28 protein.